A 418-amino-acid chain; its full sequence is FXa-directed anticoagulant (418 aa).

A signal peptide spans 1–19; that stretch reads MNLKIAIIVICQLVYFTQG. 3 N-linked (GlcNAc...) asparagine glycosylation sites follow: Asn-117, Asn-167, and Asn-286.

This sequence belongs to the serpin family. In terms of assembly, interacts with host coagulation factor X/F10 (activated). In terms of tissue distribution, female salivary gland (at protein level).

The protein resides in the secreted. Its function is as follows. Anticoagulant and antithrombotic serpin-type protein inhibiting host coagulation factor Xa (F10). Does not inhibit host uPA/urokinase-type plasminogen activator (PLAU), kallikrein, granzyme B (GZMB), matriptase, elastase, alpha-chymotrypsin, chymase, coagulation factor XIIa (F12), coagulation factor XIa (F11), plasmin (PLG), thrombin (F2), trypsin and cathepsin G (CTSG). Inhibits factor Xa-induced production of pro-inflammatory cytokines, such as MCP-1/CCL2, TNF-alpha/TNF, IL-1beta/IL1B, IL6, IL8/CXCL8 and IL18, in human endothelial cells. Inhibits factor Xa-induced up-regulation of protease-activated receptors (PARs) F2R, F2RL1 and F2RL2 in human endothelial cells. Prevents activation of host F2RL1 via inhibition of F2RL1 cleavage by host factor Xa. Inhibits factor Xa-induced up-regulation of adhesion molecules ICAM1 and VCAM1 in human endothelial cells. Inhibits factor Xa-induced up-regulation of phosphorylated ERK1/2 in human endothelial cells. Inhibits factor Xa-induced activation of transcription factor NF-kappa-B in human endothelial cells. Reduces factor Xa-induced edema in the host. Reduces factor Xa-induced endothelial permeability in the host. The chain is FXa-directed anticoagulant from Aedes albopictus (Asian tiger mosquito).